Here is a 104-residue protein sequence, read N- to C-terminus: MQKIRKGDKVVVLSGKDKGCSGEVIKVSPKENKAFVRGINMVKRHQRQTQKQEAGIISKEAPVHLSNLAIADPKDGKPTRVGFRMNADGNKVRFAKRSGELING.

The protein belongs to the universal ribosomal protein uL24 family. As to quaternary structure, part of the 50S ribosomal subunit.

One of two assembly initiator proteins, it binds directly to the 5'-end of the 23S rRNA, where it nucleates assembly of the 50S subunit. Its function is as follows. One of the proteins that surrounds the polypeptide exit tunnel on the outside of the subunit. The chain is Large ribosomal subunit protein uL24 from Bartonella tribocorum (strain CIP 105476 / IBS 506).